The following is a 195-amino-acid chain: Imidazoleglycerol-phosphate dehydratase (195 aa).

This sequence belongs to the imidazoleglycerol-phosphate dehydratase family.

The protein localises to the cytoplasm. The enzyme catalyses D-erythro-1-(imidazol-4-yl)glycerol 3-phosphate = 3-(imidazol-4-yl)-2-oxopropyl phosphate + H2O. Its pathway is amino-acid biosynthesis; L-histidine biosynthesis; L-histidine from 5-phospho-alpha-D-ribose 1-diphosphate: step 6/9. This Dinoroseobacter shibae (strain DSM 16493 / NCIMB 14021 / DFL 12) protein is Imidazoleglycerol-phosphate dehydratase.